Consider the following 201-residue polypeptide: Large ribosomal subunit protein uL4 (201 aa).

Residues 44–71 (RAQKTRAEVTGSGKKPWRQKGTGRARSG) form a disordered region.

It belongs to the universal ribosomal protein uL4 family. As to quaternary structure, part of the 50S ribosomal subunit.

Its function is as follows. One of the primary rRNA binding proteins, this protein initially binds near the 5'-end of the 23S rRNA. It is important during the early stages of 50S assembly. It makes multiple contacts with different domains of the 23S rRNA in the assembled 50S subunit and ribosome. Functionally, forms part of the polypeptide exit tunnel. This Edwardsiella ictaluri (strain 93-146) protein is Large ribosomal subunit protein uL4.